A 344-amino-acid chain; its full sequence is Uroporphyrinogen decarboxylase (344 aa).

Residues 26–30, Asp76, Tyr152, Ser207, and His323 each bind substrate; that span reads RQAGR.

The protein belongs to the uroporphyrinogen decarboxylase family. In terms of assembly, homodimer.

Its subcellular location is the cytoplasm. The catalysed reaction is uroporphyrinogen III + 4 H(+) = coproporphyrinogen III + 4 CO2. It participates in porphyrin-containing compound metabolism; protoporphyrin-IX biosynthesis; coproporphyrinogen-III from 5-aminolevulinate: step 4/4. Its function is as follows. Catalyzes the decarboxylation of four acetate groups of uroporphyrinogen-III to yield coproporphyrinogen-III. The chain is Uroporphyrinogen decarboxylase from Hyphomonas neptunium (strain ATCC 15444).